The following is a 1576-amino-acid chain: Protein Shroom (1576 aa).

Disordered stretches follow at residues 1-31, 46-100, 112-142, 187-244, 267-434, 589-609, and 621-660; these read MKMRNHKENGNGSEMGESTKSLAKMEPENNN, SNGA…TQAG, YDQTAFHHQKQPSYAQSEGYHSYVSSSDSTS, RQSH…SSTE, ISES…ISVT, VERQQQQQKEEQQLLRPHSQS, and PNNLSPIMVGLPTGSNSASTRDCSSPTPPPPPRRSGSLLP. Residues 10–21 are compositionally biased toward polar residues; sequence GNGSEMGESTKS. Composition is skewed to low complexity over residues 46–69, 76–91, and 128–142; these read SNGANSRSSNSNASFSSASVAGSV, HNSSSSQLGQQHGSSL, and SEGYHSYVSSSDSTS. Basic residues predominate over residues 189-211; that stretch reads SHSHSHSHAHSHSNSHGHSHGHA. Composition is skewed to low complexity over residues 212–244 and 267–283; these read HSASSSSSSNNNSNGSATNNNNNNSSESTSSTE and ISESVSSSQRIVHSSRV. Polar residues predominate over residues 305 to 317; it reads DSSPTASNSSQMM. Residues 376–388 are compositionally biased toward low complexity; the sequence is QSTLSTQSSLLEL. The segment covering 399-415 has biased composition (polar residues); that stretch reads MGQSHSMGDLQQKNPHQ. The residue at position 404 (serine 404) is a Phosphoserine. The F-actin binding region required for planar polarity and cortical localization stretch occupies residues 445–920; sequence APQPPAGKPS…LESNQQKRSN (476 aa). Positions 633–643 are enriched in polar residues; it reads TGSNSASTRDC. Residues serine 667 and serine 668 each carry the phosphoserine modification. Disordered regions lie at residues 699 to 728, 743 to 823, 849 to 876, 910 to 939, 1036 to 1055, 1091 to 1116, and 1210 to 1244; these read ISFNDCGMPPPPPPPRGRLAVPTRRTSSAT, AALA…NCFA, VPKKPTSLQHKHLANGGGGSRKRPHHAT, NLESNQQKRSNSKASYLPRQSLEKLNNTDP, GYGKSSKPVTPQQYTRSQSY, PTATPTPTPTPTPTPPRLSPASSHSD, and SFANEPLMTPPLPPSPPPPLEPEEEEEQEENDVHD. Positions 748–759 are enriched in basic residues; it reads QQHHPQQHRHAQ. The span at 798–816 shows a compositional bias: pro residues; it reads PLPPPPPPEVLQPRPPPSP. Composition is skewed to polar residues over residues 910–923 and 1042–1055; these read NLESNQQKRSNSKA and KPVTPQQYTRSQSY. Composition is skewed to pro residues over residues 1094–1108 and 1217–1229; these read TPTPTPTPTPTPPRL and MTPPLPPSPPPPL. Residues 1230–1239 are compositionally biased toward acidic residues; sequence EPEEEEEQEE. Residues 1232–1296 adopt a coiled-coil conformation; it reads EEEEEQEEND…LEAAREEHQT (65 aa). The region spanning 1305–1572 is the ASD2 domain; sequence RQPIELDYEQ…QLSSLSDALV (268 aa).

The protein belongs to the shroom family. Monomer or homodimer. Interacts with Rok. In terms of assembly, binds (via N-terminus) to F-actin.

The protein resides in the cell junction. The protein localises to the adherens junction. It is found in the cytoplasm. It localises to the cytoskeleton. Its subcellular location is the apical cell membrane. In terms of biological role, binds to Rho-kinase Rok and targets it to the apical cell cortex where it mediates apical constriction. During embryogenic axis elongation, required for the localization to adherens junctions and the establishment of planar polarization of both Rho-kinase Rok and myosin regulatory light chain sqh. May be involved in the assembly of microtubule arrays during cell elongation. The protein is Protein Shroom of Drosophila melanogaster (Fruit fly).